The chain runs to 156 residues: ATP synthase subunit b (156 aa).

Residues 7–27 form a helical membrane-spanning segment; the sequence is LIGELIAFTVFVLFCMKFVWP.

Belongs to the ATPase B chain family. As to quaternary structure, F-type ATPases have 2 components, F(1) - the catalytic core - and F(0) - the membrane proton channel. F(1) has five subunits: alpha(3), beta(3), gamma(1), delta(1), epsilon(1). F(0) has three main subunits: a(1), b(2) and c(10-14). The alpha and beta chains form an alternating ring which encloses part of the gamma chain. F(1) is attached to F(0) by a central stalk formed by the gamma and epsilon chains, while a peripheral stalk is formed by the delta and b chains.

Its subcellular location is the cell inner membrane. In terms of biological role, f(1)F(0) ATP synthase produces ATP from ADP in the presence of a proton or sodium gradient. F-type ATPases consist of two structural domains, F(1) containing the extramembraneous catalytic core and F(0) containing the membrane proton channel, linked together by a central stalk and a peripheral stalk. During catalysis, ATP synthesis in the catalytic domain of F(1) is coupled via a rotary mechanism of the central stalk subunits to proton translocation. Functionally, component of the F(0) channel, it forms part of the peripheral stalk, linking F(1) to F(0). The sequence is that of ATP synthase subunit b from Pseudoalteromonas translucida (strain TAC 125).